A 1915-amino-acid polypeptide reads, in one-letter code: Protein TIC 214 (1915 aa).

6 helical membrane-spanning segments follow: residues 18-38 (IINS…FSIG), 64-84 (FITG…HLAL), 90-110 (ITVL…HKYF), 126-146 (LNIQ…HFIL), 174-194 (VGWL…LIWI), and 230-250 (IFSI…PSTL). 2 disordered regions span residues 260–319 (KMKQ…EIRV) and 1566–1631 (NKNI…GSVL). Acidic residues predominate over residues 267–277 (SEEETDVEIET). Residues 279–288 (SETKETKEEQ) show a composition bias toward basic and acidic residues. The segment covering 304 to 315 (EKEDPDKIDETE) has biased composition (acidic residues). Residues 1587–1601 (KSLELENRNQEEKES) are compositionally biased toward basic and acidic residues. Residues 1602–1631 (SSQGDLGSNAQNQGNLGPNAQNQGNLGSVL) are compositionally biased toward polar residues.

The protein belongs to the TIC214 family. As to quaternary structure, part of the Tic complex.

It is found in the plastid. The protein localises to the chloroplast inner membrane. Functionally, involved in protein precursor import into chloroplasts. May be part of an intermediate translocation complex acting as a protein-conducting channel at the inner envelope. The protein is Protein TIC 214 of Platanus occidentalis (Sycamore).